The primary structure comprises 46 residues: uncharacterized protein (46 aa).

Residues 1–46 (MEVTPLETGRARSHQKASTAAQPHAADEKMTGSTARRYLSQDHQSV) are disordered.

This is an uncharacterized protein from Treponema pallidum (strain Nichols).